The chain runs to 272 residues: Orotidine 5'-phosphate decarboxylase (272 aa).

The Proton donor role is filled by Lys95.

Belongs to the OMP decarboxylase family. Type 2 subfamily.

It carries out the reaction orotidine 5'-phosphate + H(+) = UMP + CO2. Its pathway is pyrimidine metabolism; UMP biosynthesis via de novo pathway; UMP from orotate: step 2/2. The polypeptide is Orotidine 5'-phosphate decarboxylase (Cupriavidus taiwanensis (strain DSM 17343 / BCRC 17206 / CCUG 44338 / CIP 107171 / LMG 19424 / R1) (Ralstonia taiwanensis (strain LMG 19424))).